The sequence spans 866 residues: MVANKDKATKRKIPAVDDAVKVSTANGKQQTKLKEPVDDESASDYYESDEENLFASIDNGNDEDSTDSEGEGEESDDEEVQEFESADSDFEDESGKDDEEEAEDEEDDADEEDADSADDVNSDSSPEPEEEESDDELEFEEDLEEPEQPKAIQKVIVGRQKKSVEATAEDEDEEDDEETRDLLEAAQKEDEKLGEIDAALGIAPAKTRGVGIFPPEAKSRFKGGKNQDEYAAGDTSDEEDIRNTVGNIPMHWYDEYKHIGYDWEGNRLIKPAKTDAIDDFLKKMEDPNFWRTVKDPQTGQNVVLTDEDIGLIKRIMAGKNPDEQYSDYEPWIEWFTSEVEKMPIRNIPDHKRSFLPSKSEKQKVGRLVHALKMGWIKTRAETERLAALSKGPKFYMIWESDHGKEEMRRIHDHVVAPKRPLPGHAESYNPPPEYLFNEQELAEWNSHEEEPWKRKLHYVPQKFNSLREVPYYDKYIRERFLRCLDLYLCPRGKRTRVTVGPEYLIPKLPSPKDLQPFPTLQNLIYKGHTDMIRSVSIEPKGEYLVTGSDDQTVKIWEVSTARCIRTIPTGDVVRSVAWCPNSKISLIAVASGKRVLLINPQVGDSLLVKKTDDLLAEAPKSETVDNERITTAVQWVDFTEEERKSGVRIVINHFKEIKQVTWHGRGDYFATVMPEAANRSVLIHQLSKRRSQFPFSKSKGLIQCVLFHPVKPCLFVATQRHVRVYDLVKQELLKKLFPSCKWISSMAIHPKGDNLLVATYEKKMMWFDLDLSTRPYQQLKLHHSAIRNVAFHLRYPLFASASDDRSVIVSHGMVYNDLLQNPLIVPLRRLEHHERVNDFGAFDVVFHPTQPWLFSSGADNTVRLYT.

Disordered stretches follow at residues 1–180 (MVAN…EETR) and 214–241 (PPEA…EEDI). 3 stretches are compositionally biased toward acidic residues: residues 37-52 (VDDE…DEEN), 60-146 (GNDE…LEEP), and 167-179 (TAED…DEET). WD repeat units lie at residues 527-566 (GHTD…CIRT), 568-608 (PTGD…SLLV), 697-735 (KSKG…LLKK), 738-777 (PSCK…RPYQ), 781-820 (LHHS…DLLQ), and 836-866 (VNDF…RLYT).

This sequence belongs to the WD repeat BOP1/ERB1 family.

The protein localises to the nucleus. Its subcellular location is the nucleolus. The protein resides in the nucleoplasm. Functionally, required for maturation of ribosomal RNAs and formation of the large ribosomal subunit. This Aedes aegypti (Yellowfever mosquito) protein is Ribosome biogenesis protein BOP1 homolog.